The sequence spans 601 residues: ATP-dependent RNA helicase DeaD (601 aa).

Residues 6-34 carry the Q motif motif; it reads STFSFLGLNPFIIQSLNEMGYVKPSPIQA. Residues 37-208 enclose the Helicase ATP-binding domain; it reads IPLLLEGRDV…KRFMRNPKEI (172 aa). 50-57 is a binding site for ATP; the sequence is AQTGSGKT. The DEAD box motif lies at 156–159; sequence DEAD. The Helicase C-terminal domain occupies 231-378; sequence KTDALIRFLE…EVQLPKVELL (148 aa). Residues 552–576 show a composition bias toward basic and acidic residues; the sequence is SRHYENKTTHRSIFNKDKNSNRRVS. The segment at 552–601 is disordered; the sequence is SRHYENKTTHRSIFNKDKNSNRRVSDGSFNKSNSPKKTEFKSSFFRRRNV.

Belongs to the DEAD box helicase family. DeaD/CsdA subfamily.

The protein resides in the cytoplasm. It carries out the reaction ATP + H2O = ADP + phosphate + H(+). Functionally, DEAD-box RNA helicase involved in various cellular processes at low temperature, including ribosome biogenesis, mRNA degradation and translation initiation. The sequence is that of ATP-dependent RNA helicase DeaD from Buchnera aphidicola subsp. Acyrthosiphon pisum (strain APS) (Acyrthosiphon pisum symbiotic bacterium).